We begin with the raw amino-acid sequence, 94 residues long: Pyrimidine/purine nucleoside phosphorylase (94 aa).

This sequence belongs to the nucleoside phosphorylase PpnP family.

It carries out the reaction a purine D-ribonucleoside + phosphate = a purine nucleobase + alpha-D-ribose 1-phosphate. It catalyses the reaction adenosine + phosphate = alpha-D-ribose 1-phosphate + adenine. The catalysed reaction is cytidine + phosphate = cytosine + alpha-D-ribose 1-phosphate. The enzyme catalyses guanosine + phosphate = alpha-D-ribose 1-phosphate + guanine. It carries out the reaction inosine + phosphate = alpha-D-ribose 1-phosphate + hypoxanthine. It catalyses the reaction thymidine + phosphate = 2-deoxy-alpha-D-ribose 1-phosphate + thymine. The catalysed reaction is uridine + phosphate = alpha-D-ribose 1-phosphate + uracil. The enzyme catalyses xanthosine + phosphate = alpha-D-ribose 1-phosphate + xanthine. In terms of biological role, catalyzes the phosphorolysis of diverse nucleosides, yielding D-ribose 1-phosphate and the respective free bases. Can use uridine, adenosine, guanosine, cytidine, thymidine, inosine and xanthosine as substrates. Also catalyzes the reverse reactions. The chain is Pyrimidine/purine nucleoside phosphorylase from Pectobacterium atrosepticum (strain SCRI 1043 / ATCC BAA-672) (Erwinia carotovora subsp. atroseptica).